Here is a 330-residue protein sequence, read N- to C-terminus: Fructose-1,6-bisphosphatase class 1 (330 aa).

Residues glutamate 84, aspartate 103, leucine 105, and aspartate 106 each coordinate Mg(2+). Residues 106 to 109, asparagine 196, and lysine 262 contribute to the substrate site; that span reads DGSS. Residue glutamate 268 coordinates Mg(2+).

It belongs to the FBPase class 1 family. In terms of assembly, homotetramer. Mg(2+) serves as cofactor.

The protein resides in the cytoplasm. The enzyme catalyses beta-D-fructose 1,6-bisphosphate + H2O = beta-D-fructose 6-phosphate + phosphate. It participates in carbohydrate biosynthesis; gluconeogenesis. This Shewanella putrefaciens (strain CN-32 / ATCC BAA-453) protein is Fructose-1,6-bisphosphatase class 1.